Reading from the N-terminus, the 282-residue chain is Probable xyloglucan endotransglucosylase/hydrolase protein 18 (282 aa).

The signal sequence occupies residues 1–26 (MKLSCGTSFAFLIMFLFAAQSMHVYA). The GH16 domain maps to 27-218 (GSFHKDVQIH…WSKAPFTAFY (192 aa)). Glu104 acts as the Nucleophile in catalysis. Catalysis depends on Glu108, which acts as the Proton donor. Glu108 contributes to the xyloglucan binding site. Asn112 carries N-linked (GlcNAc...) asparagine glycosylation. Residues 121-123 (HTN), 131-133 (DKE), 197-198 (HW), and Gly202 contribute to the xyloglucan site. Cys226 and Cys235 are oxidised to a cystine. Asn238 carries an N-linked (GlcNAc...) asparagine glycan. An intrachain disulfide couples Cys267 to Cys281. Arg272 serves as a coordination point for xyloglucan.

It belongs to the glycosyl hydrolase 16 family. XTH group 2 subfamily. In terms of processing, contains at least one intrachain disulfide bond essential for its enzymatic activity. Root specific.

It localises to the secreted. The protein resides in the cell wall. It is found in the extracellular space. Its subcellular location is the apoplast. The enzyme catalyses breaks a beta-(1-&gt;4) bond in the backbone of a xyloglucan and transfers the xyloglucanyl segment on to O-4 of the non-reducing terminal glucose residue of an acceptor, which can be a xyloglucan or an oligosaccharide of xyloglucan.. Functionally, catalyzes xyloglucan endohydrolysis (XEH) and/or endotransglycosylation (XET). Cleaves and religates xyloglucan polymers, an essential constituent of the primary cell wall, and thereby participates in cell wall construction of growing tissues. The polypeptide is Probable xyloglucan endotransglucosylase/hydrolase protein 18 (XTH18) (Arabidopsis thaliana (Mouse-ear cress)).